Consider the following 652-residue polypeptide: Type III restriction-modification enzyme StyLTI Mod subunit (652 aa).

Positions 135–138 (DPPY) are binding of S-adenosyl methionine.

The protein belongs to the N(4)/N(6)-methyltransferase family. Homodimer, also forms a functional restriction-competent complex with Res.

It catalyses the reaction a 2'-deoxyadenosine in DNA + S-adenosyl-L-methionine = an N(6)-methyl-2'-deoxyadenosine in DNA + S-adenosyl-L-homocysteine + H(+). Functionally, a beta subtype methylase that binds the system-specific DNA recognition site 5'-CAGAG-3' and methylates A-4 (of only 1 strand as the other does not have an A residue). DNA restriction requires both the Res and Mod subunits. This chain is Type III restriction-modification enzyme StyLTI Mod subunit, found in Salmonella typhimurium (strain LT2 / SGSC1412 / ATCC 700720).